The primary structure comprises 234 residues: Probable chemoreceptor glutamine deamidase CheD 1 (234 aa).

A disordered region spans residues 183 to 234 (AREAAGPRGERAARARPRVELFGTPAPKAQATPRIELFGTRATQPATRKQEA). A compositionally biased stretch (basic and acidic residues) spans 190 to 201 (RGERAARARPRV). Over residues 223–234 (RATQPATRKQEA) the composition is skewed to polar residues.

Belongs to the CheD family.

It catalyses the reaction L-glutaminyl-[protein] + H2O = L-glutamyl-[protein] + NH4(+). In terms of biological role, probably deamidates glutamine residues to glutamate on methyl-accepting chemotaxis receptors (MCPs), playing an important role in chemotaxis. This Burkholderia thailandensis (strain ATCC 700388 / DSM 13276 / CCUG 48851 / CIP 106301 / E264) protein is Probable chemoreceptor glutamine deamidase CheD 1.